Reading from the N-terminus, the 155-residue chain is Peptidyl-prolyl cis-trans isomerase ppi1 (155 aa).

A PPIase cyclophilin-type domain is found at 1-154; the sequence is MANVELQTSL…EPLKIIKAVA (154 aa).

Belongs to the cyclophilin-type PPIase family. PPIL1 subfamily. As to quaternary structure, interacts with cwf13/snw1.

The catalysed reaction is [protein]-peptidylproline (omega=180) = [protein]-peptidylproline (omega=0). In terms of biological role, PPIases accelerate the folding of proteins. It catalyzes the cis-trans isomerization of proline imidic peptide bonds in oligopeptides. This chain is Peptidyl-prolyl cis-trans isomerase ppi1 (ppi1), found in Schizosaccharomyces pombe (strain 972 / ATCC 24843) (Fission yeast).